An 826-amino-acid chain; its full sequence is MATTSHVEHELLSKLIDELKVKANSDPEADVLAGRLLHRLKAESVTHTVAEYLEVFSDKFYDEEFFQMHRDELETRVSAFAQSPAYERIVSSGYLSALRYYDTYLYVGRSGKQESVQHFYMRLAGFCASTTCLYAGLRAALQRARPEIESDMEVFDYYFEHLTSQTVCCSTPFMRFAGVENSTLASCILTTPDLSSEWDVTQALYRHLGRYLFQRAGVGVGVTGAGQDGKHISLLMRMINSHVEYHNYGCKRPVSVAAYMEPWHSQIFKFLETKLPENHERCPGIFTGLFVPELFFKLFRDTPWSDWYLFDPKDAGDLERLYGEEFEREYYRLVTAGKFCGRVSIKSLMFSIVNCAVKAGSPFILLKEACNAHFWRDLQGEAMNAANLCAEVLQPSRKSVATCNLANICLPRCLVNAPLAVRAQRADTQGDELLLALPRLSVTLPGEGAVGDGFSLARLRDATQCATFVVACSILQGSPTYDSRDMASMGLGVQGLADVFADLGWQYTDPPSRSLNKEIFEHMYFTALCTSSLIGLHTRKIFPGFKQSKYAGGWFHWHDWAGTDLSIPREIWSRLSERIVRDGLFNSQFIALMPTSGCAQVTGCSDAFYPFYANASTKVTNKEEALRPNRSFWRHVRLDDREALNLVGGRVSCLPEALRQRYLRFQTAFDYNQEDLIQMSRDRAPFVDQSQSHSLFLREEDAARASTLANLLVRSYELGLKTIMYYCRIEKAADLGVMECKASAALSVPREEQNERSPAEQMPPRPMEPAQVAGPVDIMSKGPGEGPGGWCVPGGLEVCYKYRQLFSEDDLLETDGFTERACESCQ.

Substrate-binding positions include threonine 171, 186 to 187 (SC), glycine 217, 387 to 391 (NLCAE), and 594 to 598 (PTSGC). A disulfide bond links cysteine 187 and cysteine 403. The Proton acceptor role is filled by asparagine 387. Cysteine 389 serves as the catalytic Cysteine radical intermediate. The active-site Proton acceptor is the glutamate 391. The tract at residues 747 to 769 (SVPREEQNERSPAEQMPPRPMEP) is disordered. Positions 749–758 (PREEQNERSP) are enriched in basic and acidic residues.

The protein belongs to the ribonucleoside diphosphate reductase large chain family. As to quaternary structure, heterotetramer composed of a homodimer of the large subunit (R1) and a homodimer of the small subunit (R2). Larger multisubunit protein complex are also active, composed of (R1)n(R2)n.

The catalysed reaction is a 2'-deoxyribonucleoside 5'-diphosphate + [thioredoxin]-disulfide + H2O = a ribonucleoside 5'-diphosphate + [thioredoxin]-dithiol. Functionally, ribonucleoside-diphosphate reductase holoenzyme provides the precursors necessary for viral DNA synthesis. Allows virus growth in non-dividing cells, as well as reactivation from latency in infected hosts. Catalyzes the biosynthesis of deoxyribonucleotides from the corresponding ribonucleotides. The protein is Ribonucleoside-diphosphate reductase large subunit of Homo sapiens (Human).